A 282-amino-acid polypeptide reads, in one-letter code: Protease HtpX homolog (282 aa).

A run of 2 helical transmembrane segments spans residues 6–26 (TFILMTFLALIFMFFGGLIGG) and 28–48 (QGVIIAFVVALGMNFFSYFFS). His130 provides a ligand contact to Zn(2+). The active site involves Glu131. His134 is a Zn(2+) binding site. The next 2 membrane-spanning stretches (helical) occupy residues 140–160 (ILIGSVAAVFAGAIAILANFA) and 177–197 (ILMIVAAIIMPIAAAIIQMAI). Glu202 serves as a coordination point for Zn(2+).

Belongs to the peptidase M48B family. Zn(2+) is required as a cofactor.

It is found in the cell inner membrane. The protein is Protease HtpX homolog of Campylobacter hominis (strain ATCC BAA-381 / DSM 21671 / CCUG 45161 / LMG 19568 / NCTC 13146 / CH001A).